A 156-amino-acid chain; its full sequence is Small ribosomal subunit protein uS7 (156 aa).

It belongs to the universal ribosomal protein uS7 family. As to quaternary structure, part of the 30S ribosomal subunit. Contacts proteins S9 and S11.

One of the primary rRNA binding proteins, it binds directly to 16S rRNA where it nucleates assembly of the head domain of the 30S subunit. Is located at the subunit interface close to the decoding center, probably blocks exit of the E-site tRNA. This is Small ribosomal subunit protein uS7 from Clostridium kluyveri (strain NBRC 12016).